A 449-amino-acid chain; its full sequence is Exodeoxyribonuclease 7 large subunit (449 aa).

It belongs to the XseA family. As to quaternary structure, heterooligomer composed of large and small subunits.

The protein localises to the cytoplasm. It catalyses the reaction Exonucleolytic cleavage in either 5'- to 3'- or 3'- to 5'-direction to yield nucleoside 5'-phosphates.. Bidirectionally degrades single-stranded DNA into large acid-insoluble oligonucleotides, which are then degraded further into small acid-soluble oligonucleotides. The chain is Exodeoxyribonuclease 7 large subunit from Latilactobacillus sakei subsp. sakei (strain 23K) (Lactobacillus sakei subsp. sakei).